The chain runs to 370 residues: Protein TEEBE (370 aa).

An N-terminal signal peptide occupies residues 1–21; that stretch reads MSLYHSLSIFLLLSLCHGSYS. Asn-215 carries N-linked (GlcNAc...) asparagine glycosylation.

As to expression, expressed in primary and lateral roots, stigmatic papillae and hypocotyls.

Its subcellular location is the secreted. The protein resides in the cell wall. Functionally, prevents hypocotyl epidermal cells elongation by modulating the pectin status in cell walls. Likely regulates pectin methylesterification degree during cell separation and elongation, including upon root-knot nematode Meloidogyne incognita infection. The sequence is that of Protein TEEBE from Arabidopsis thaliana (Mouse-ear cress).